A 395-amino-acid chain; its full sequence is Levanbiose-producing levanase (395 aa).

D1 is an active-site residue. Residues W59 to T60, R124 to D125, E173, and W261 each bind substrate.

Belongs to the glycosyl hydrolase 32 family.

The protein resides in the membrane. The enzyme catalyses Hydrolysis of (2-&gt;6)-beta-D-fructofuranan, to remove successive disaccharide residues as levanbiose, i.e. 6-(beta-D-fructofuranosyl)-D-fructose, from the end of the chain.. Functionally, catalyzes the degradation of levan mainly into levanbiose (difructose). Can also hydrolyze inulin. The protein is Levanbiose-producing levanase (levB) of Geobacillus stearothermophilus (Bacillus stearothermophilus).